The following is a 431-amino-acid chain: 23S rRNA (uracil(1939)-C(5))-methyltransferase RlmD (431 aa).

The region spanning Arg-10–Arg-68 is the TRAM domain. Residues Cys-81, Cys-87, Cys-90, and Cys-161 each coordinate [4Fe-4S] cluster. S-adenosyl-L-methionine contacts are provided by Gln-264, Phe-293, Asn-298, Glu-314, Asn-341, and Asp-362. The Nucleophile role is filled by Cys-388.

It belongs to the class I-like SAM-binding methyltransferase superfamily. RNA M5U methyltransferase family. RlmD subfamily.

It catalyses the reaction uridine(1939) in 23S rRNA + S-adenosyl-L-methionine = 5-methyluridine(1939) in 23S rRNA + S-adenosyl-L-homocysteine + H(+). In terms of biological role, catalyzes the formation of 5-methyl-uridine at position 1939 (m5U1939) in 23S rRNA. This is 23S rRNA (uracil(1939)-C(5))-methyltransferase RlmD from Salmonella choleraesuis (strain SC-B67).